Consider the following 804-residue polypeptide: MKRKERRINKDYGYNRKCVCHYEASQKRFCYSQYSCASVLYERVRDIAKIIDRLDSGLDAWCLRDAIISVLRATHCVPRVDRMLGRWYLKTSVFYDFCPDDLILSCPNVIMPNVLNFVKKYRDFIRSVLYKVSVSWKNQYMPGVLAASRFLEEISNSLNGVEESIPCIYLRMCATLTEIVLRIGYLREIYQENPYVMFEELAFSLFTQKWVLPFSCMTNLGLVEKANSTVFDVAIYNTCLYSLVDFTIVNGEHLFPALLNGSNISMNLTRYQQEAKNIFEILLSQIRVVERDTDKTVQLTVYVEVWHVSALMWLDLYEALPQTSRVTFCLIIPGIFMDRYELKRAQWSLFHKNIAFELGKCDEITFSTKYLEFERTTDHAKITMSSFIEKICLCLKGGRMGLIFRKNVYQYSMIPHVPLYCGGDFLDVLPVRDGINTCMRMLLNVVHFLGDEVSDELTEEIDFVRLQCKFFMFNELRRVVRKMVLVANAVIDYAVENKDFLCEGIEDGRSLGICVTGLHSVFMTVGLSYAHPDARRLYRMICEHIYYTCVRTSVDCCMKGAEPCNLFDRSKYALGMLYFDHFDNVECTLPEELWTTLRKDVLMHGVRNIHFTAGTAMQKEFDIINSSESFWPMEDNKILRRSNIKVVIGKDGLNDVTSVYSSELKSLYIPVYNNLLLNRFNKHQQYLKTVGYRVLNVDTNLFTDKELDDLAVFKDGFSYHLNDLIEMYKSGLPFLDQGQANVFYFNDTVSLRLLLPLLYKAGFKVAMYKVLCNSEMYKHLDLSNPLPLIGKCSDGVVMHVKNIL.

It belongs to the ribonucleoside diphosphate reductase large chain family.

It localises to the virion. Its subcellular location is the host cytoplasm. Does not possess a ribonucleotide reductase activity. Betaherpesviruses probably use another strategy to expand the dNTP pool in a quiescent host cell. The polypeptide is Ribonucleoside-diphosphate reductase large subunit-like protein (Homo sapiens (Human)).